The chain runs to 226 residues: Ribosomal RNA small subunit methyltransferase G (226 aa).

S-adenosyl-L-methionine contacts are provided by residues Gly-95, Leu-100, 146 to 147 (VE), and Arg-159.

The protein belongs to the methyltransferase superfamily. RNA methyltransferase RsmG family.

Its subcellular location is the cytoplasm. The enzyme catalyses guanosine(527) in 16S rRNA + S-adenosyl-L-methionine = N(7)-methylguanosine(527) in 16S rRNA + S-adenosyl-L-homocysteine. In terms of biological role, specifically methylates the N7 position of guanine in position 527 of 16S rRNA. The protein is Ribosomal RNA small subunit methyltransferase G of Acidovorax ebreus (strain TPSY) (Diaphorobacter sp. (strain TPSY)).